We begin with the raw amino-acid sequence, 443 residues long: Threonine/serine transporter TdcC (443 aa).

A run of 11 helical transmembrane segments spans residues 22–42, 44–64, 97–117, 140–160, 163–183, 207–227, 259–279, 319–339, 366–386, 389–409, and 423–443; these read TTWT…FFPI, AGFG…PIAF, GVVI…IYGV, FVAL…KDLM, VMSY…LSLI, ILVT…FSPI, ASML…FTLS, ASII…LGTL, ISMI…PNIL, IEAM…MYAI, and DNVF…YKLF.

Belongs to the amino acid/polyamine transporter 2 family. SdaC/TdcC subfamily.

Its subcellular location is the cell inner membrane. The enzyme catalyses L-threonine(in) + H(+)(in) = L-threonine(out) + H(+)(out). It catalyses the reaction L-serine(in) + H(+)(in) = L-serine(out) + H(+)(out). Involved in the import of threonine and serine into the cell, with the concomitant import of a proton (symport system). This Salmonella newport (strain SL254) protein is Threonine/serine transporter TdcC.